Here is a 2167-residue protein sequence, read N- to C-terminus: Myosin-VIIa (2167 aa).

The 671-residue stretch at 63-733 folds into the Myosin motor domain; the sequence is QGVEDMISLG…HDLFLEQERD (671 aa). 156–163 contributes to the ATP binding site; sequence GESGAGKT. Actin-binding stretches follow at residues 612-634 and 712-726; these read LDAL…KPNE and QLGH…AHDL. IQ domains follow at residues 736–758, 759–788, 805–827, and 828–857; these read LTRK…RFLR, LRAA…GYMR, LRGH…EYGH, and KMWA…EHKQ. Residues 886–919 adopt a coiled-coil conformation; that stretch reads QHYRDRLHELERREIQEQLENRRRVEVNMNIIND. One can recognise a MyTH4 1 domain in the interval 1008–1245; it reads YAKKALKHPL…PSWLELQATK (238 aa). One can recognise an FERM 1 domain in the interval 1250–1560; that stretch reads IMLPITFMDG…YFLDGLKKRS (311 aa). An SH3 domain is found at 1558-1627; it reads KRSKYVIALQ…PAETVYVLPT (70 aa). Phosphoserine is present on residues Ser-1651 and Ser-1654. Positions 1701-1849 constitute a MyTH4 2 domain; sequence YSRDPIKAPL…PHQVEVEAIQ (149 aa). The 304-residue stretch at 1855-2158 folds into the FERM 2 domain; it reads IFHKVYFPDD…SYISLMLTNM (304 aa). Thr-2045 carries the post-translational modification Phosphothreonine.

This sequence belongs to the TRAFAC class myosin-kinesin ATPase superfamily. Myosin family. In terms of assembly, homodimerizes in a two headed molecule through the formation of a coiled-coil rod. Homodimers motility is approximately 8-10 times slower than that of myosin V, and its step size is 30 nm, which is consistent with the presence of five IQ motifs in its neck region. Interacts with Cad99C (via the cytoplasmic domain). Interacts with zip and Sans. Expressed in the setae, micro- and macrochaetae on the head, thorax and wing.

The protein resides in the cytoplasm. It is found in the cell cortex. Its subcellular location is the cell projection. It localises to the microvillus. Its function is as follows. Myosins are actin-based motor molecules with ATPase activity. Unconventional myosins serve in intracellular movements: can function in cells as a single-molecule cargo transporter. A very slow and high-duty-ratio motor, may be suitable for tension maintenance of actin filaments. Their highly divergent tails are presumed to bind to membranous compartments, which would be moved relative to actin filaments. Plays a key role in the formation of cellular projections and other actin-based functions required for embryonic and larval viability. Necessary for auditory transduction: plays a role in Johnston's organ organization by functioning in scolopidial apical attachment and therefore to acoustic stimulus propagation from the antenna a2/a3 joint to transducing elements. Interaction with the myosin zip may be important for its function in scolopidial apical attachment. During oogenesis it has Cad99c-dependent and Cad99c-independent roles in regulating the shape and spacing of the follicle cell microvilli which secrete eggshell material such as the vitelline membrane. May be required for the normal expression of Cad99c in the follicle cell microvilli. This Drosophila melanogaster (Fruit fly) protein is Myosin-VIIa.